A 453-amino-acid chain; its full sequence is UDP-N-acetylmuramoylalanine--D-glutamate ligase (453 aa).

115–121 (GTNGKTT) provides a ligand contact to ATP.

The protein belongs to the MurCDEF family.

The protein localises to the cytoplasm. It catalyses the reaction UDP-N-acetyl-alpha-D-muramoyl-L-alanine + D-glutamate + ATP = UDP-N-acetyl-alpha-D-muramoyl-L-alanyl-D-glutamate + ADP + phosphate + H(+). It functions in the pathway cell wall biogenesis; peptidoglycan biosynthesis. In terms of biological role, cell wall formation. Catalyzes the addition of glutamate to the nucleotide precursor UDP-N-acetylmuramoyl-L-alanine (UMA). The polypeptide is UDP-N-acetylmuramoylalanine--D-glutamate ligase (Geotalea uraniireducens (strain Rf4) (Geobacter uraniireducens)).